The chain runs to 860 residues: Leucine--tRNA ligase (860 aa).

The short motif at 42 to 52 is the 'HIGH' region element; sequence PYPSGRLHMGH. The 'KMSKS' region motif lies at 619 to 623; it reads KMSKS. Position 622 (Lys622) interacts with ATP.

This sequence belongs to the class-I aminoacyl-tRNA synthetase family.

It is found in the cytoplasm. The catalysed reaction is tRNA(Leu) + L-leucine + ATP = L-leucyl-tRNA(Leu) + AMP + diphosphate. The sequence is that of Leucine--tRNA ligase from Citrobacter koseri (strain ATCC BAA-895 / CDC 4225-83 / SGSC4696).